The chain runs to 216 residues: UPF0598 protein C8orf82 (216 aa).

Belongs to the UPF0598 family.

The polypeptide is UPF0598 protein C8orf82 (C8orf82) (Homo sapiens (Human)).